Reading from the N-terminus, the 735-residue chain is Funoran endo-beta-hydrolase (735 aa).

The first 27 residues, 1-27 (MRVKSVYKKLSVSFILVMLSASQEVNS), serve as a signal peptide directing secretion. Catalysis depends on E200, which acts as the Proton donor. Residue E322 is the Nucleophile of the active site.

This sequence belongs to the glycosyl hydrolase 86 family.

The catalysed reaction is Endohydrolysis of beta-(1-&gt;4)-linkages between beta-D-galactopyranose-6-sulfate and 3,6-anhydro-alpha-L-galactopyranose units in funoran.. The enzyme catalyses Hydrolysis of (1-&gt;4)-beta-D-galactosidic linkages in agarose, giving the tetramer as the predominant product.. Its activity is regulated as follows. Agarase activity is enhanced in the presence of NaCl. Agarase activity is significantly inhibited by Zn(2+) and slightly activated by several divalent ions including Mg(2+), Cd(2+) and Ca(2+). Functionally, endohydrolase that cleaves the beta-1,4 glycosidic bond between beta-D-galactopyranose-6-sulfate (G6S) and 3,6-anhydro-alpha-L-galactopyranose (LA) unit of funoran, a polysaccharide produced by red algae of the genus Gloiopeltis. It releases the disaccharide LA-G6S as the predominant end product. Also acts as a random endo-acting beta-agarase, which can hydrolyze agarose tetrasaccharides and hexasaccharides, and produces disaccharides as smallest products. Besides typical agarose oligosaccharides, it can use methylated galactoses. The enzyme exhibits higher catalytic efficiency towards agarose, but binds funoran preferentially. Has no activity on porphyran. The sequence is that of Funoran endo-beta-hydrolase from Wenyingzhuangia aestuarii.